Here is a 118-residue protein sequence, read N- to C-terminus: MARIAGINIPVHKHTVIALSSIYGIGLSRARKICGAVGVPSDKKIRDLSDNELEGLRAEVAKYPVEGDLRREISMDIKRLMDLGCYRGIRHRRGLPVRGQRTQTNARTRKGPRRLARK.

The interval 94–118 (GLPVRGQRTQTNARTRKGPRRLARK) is disordered. A compositionally biased stretch (basic residues) spans 107–118 (RTRKGPRRLARK).

Belongs to the universal ribosomal protein uS13 family. In terms of assembly, part of the 30S ribosomal subunit. Forms a loose heterodimer with protein S19. Forms two bridges to the 50S subunit in the 70S ribosome.

Functionally, located at the top of the head of the 30S subunit, it contacts several helices of the 16S rRNA. In the 70S ribosome it contacts the 23S rRNA (bridge B1a) and protein L5 of the 50S subunit (bridge B1b), connecting the 2 subunits; these bridges are implicated in subunit movement. Contacts the tRNAs in the A and P-sites. In Nitrosococcus oceani (strain ATCC 19707 / BCRC 17464 / JCM 30415 / NCIMB 11848 / C-107), this protein is Small ribosomal subunit protein uS13.